The chain runs to 78 residues: MRPCIWIHVHLKPPCRLVELLPFSSALQGLSHLSLGTTLPVILPERNEEQNLQELSHNADKYQMGDCCKEEIDDSIFY.

May act as a tumor suppressor. The polypeptide is Leukemia-associated protein 1 (DLEU1) (Homo sapiens (Human)).